The sequence spans 328 residues: MIEKIWSGESPLWRLLLPLSWLYGLVSGAIRLCYKLKLKRAWRAPVPVVVVGNLTAGGNGKTPVVVWLVEQLQQRGIRVGVVSRGYGSKAESYPLLLSADTTTAQAGDEPVLIYQRTDAPVAVSPVRSDAVKAILAQHPDVQIIVTDDGLQHYRLARDVEIVVIDGVRRFGNGWWLPAGPMRERAGRLKSVDAVIVNGGVPRSGEIPMHLLPGQAVNLRTGTRCDVAQLEHVVAMAGIGHPPRFFATLKMCGVQPEKCVPLADHQSLNHADVSALVSAGQTLVMTEKDAVKCRAFAEENWWYLPVDAQLSGDEPAKLLTQLTSLASGN.

Residue 55–62 coordinates ATP; it reads TAGGNGKT.

The protein belongs to the LpxK family.

The enzyme catalyses a lipid A disaccharide + ATP = a lipid IVA + ADP + H(+). Its pathway is glycolipid biosynthesis; lipid IV(A) biosynthesis; lipid IV(A) from (3R)-3-hydroxytetradecanoyl-[acyl-carrier-protein] and UDP-N-acetyl-alpha-D-glucosamine: step 6/6. In terms of biological role, transfers the gamma-phosphate of ATP to the 4'-position of a tetraacyldisaccharide 1-phosphate intermediate (termed DS-1-P) to form tetraacyldisaccharide 1,4'-bis-phosphate (lipid IVA). This is Tetraacyldisaccharide 4'-kinase from Shigella boydii serotype 18 (strain CDC 3083-94 / BS512).